We begin with the raw amino-acid sequence, 308 residues long: Transaldolase (308 aa).

Lys-125 acts as the Schiff-base intermediate with substrate in catalysis.

The protein belongs to the transaldolase family. Type 1 subfamily. In terms of assembly, homodimer.

It is found in the cytoplasm. The catalysed reaction is D-sedoheptulose 7-phosphate + D-glyceraldehyde 3-phosphate = D-erythrose 4-phosphate + beta-D-fructose 6-phosphate. Its pathway is carbohydrate degradation; pentose phosphate pathway; D-glyceraldehyde 3-phosphate and beta-D-fructose 6-phosphate from D-ribose 5-phosphate and D-xylulose 5-phosphate (non-oxidative stage): step 2/3. In terms of biological role, transaldolase is important for the balance of metabolites in the pentose-phosphate pathway. The polypeptide is Transaldolase (Ectopseudomonas mendocina (strain ymp) (Pseudomonas mendocina)).